Consider the following 1387-residue polypeptide: DNA-directed RNA polymerase subunit beta'' (1387 aa).

4 residues coordinate Zn(2+): C220, C291, C298, and C301.

Belongs to the RNA polymerase beta' chain family. RpoC2 subfamily. In plastids the minimal PEP RNA polymerase catalytic core is composed of four subunits: alpha, beta, beta', and beta''. When a (nuclear-encoded) sigma factor is associated with the core the holoenzyme is formed, which can initiate transcription. The cofactor is Zn(2+).

Its subcellular location is the plastid. The protein resides in the chloroplast. It carries out the reaction RNA(n) + a ribonucleoside 5'-triphosphate = RNA(n+1) + diphosphate. Functionally, DNA-dependent RNA polymerase catalyzes the transcription of DNA into RNA using the four ribonucleoside triphosphates as substrates. The polypeptide is DNA-directed RNA polymerase subunit beta'' (Carica papaya (Papaya)).